A 248-amino-acid polypeptide reads, in one-letter code: Caffeoyl-CoA O-methyltransferase 3 (248 aa).

Lysine 22 is a substrate binding site. Residues threonine 64, glutamate 86, 88–89 (GV), serine 94, aspartate 112, and alanine 141 contribute to the S-adenosyl-L-methionine site. Position 164 (aspartate 164) interacts with substrate. Aspartate 164 is an a divalent metal cation binding site. Aspartate 166 is a binding site for S-adenosyl-L-methionine. A divalent metal cation is bound by residues aspartate 190 and asparagine 191. Position 195 (asparagine 195) interacts with substrate.

It belongs to the class I-like SAM-binding methyltransferase superfamily. Cation-dependent O-methyltransferase family. CCoAMT subfamily. It depends on a divalent metal cation as a cofactor. As to expression, mostly expressed in petal limbs and tubes, and, at low levels, in stems, roots and leaves.

It is found in the cytoplasm. Its subcellular location is the cytosol. It carries out the reaction (E)-caffeoyl-CoA + S-adenosyl-L-methionine = (E)-feruloyl-CoA + S-adenosyl-L-homocysteine + H(+). It catalyses the reaction (E)-5-hydroxyferuloyl-CoA + S-adenosyl-L-methionine = (E)-sinapoyl-CoA + S-adenosyl-L-homocysteine + H(+). It functions in the pathway aromatic compound metabolism; phenylpropanoid biosynthesis. Involved in the production of floral volatile phenylpropanoids in flowers of fragrant cultivars (e.g. cv. Mitchell and cv. V26) from cinnamic acid, a common precursor with the anthocyanin biosynthesis pathway involved in flower pigmentation. Methylates caffeoyl-CoA to feruloyl-CoA, also able to methylate 5-hydroxyferuloyl-CoA. The chain is Caffeoyl-CoA O-methyltransferase 3 from Petunia hybrida (Petunia).